Reading from the N-terminus, the 62-residue chain is Large ribosomal subunit protein bL28 (62 aa).

Residues 1–27 (MARKCVVTGRQTRSGNQRSHAMNSNKR) are disordered. Residues 9–26 (GRQTRSGNQRSHAMNSNK) are compositionally biased toward polar residues.

This sequence belongs to the bacterial ribosomal protein bL28 family.

The polypeptide is Large ribosomal subunit protein bL28 (Oceanobacillus iheyensis (strain DSM 14371 / CIP 107618 / JCM 11309 / KCTC 3954 / HTE831)).